Here is a 946-residue protein sequence, read N- to C-terminus: DNA primase (946 aa).

The segment at 596–626 (RDTEEDEDGKENKNNVPDNGVFQKTTSSVDT) is disordered. Polar residues predominate over residues 617–626 (FQKTTSSVDT). A CHC2-type zinc finger spans residues 881–920 (CLNYTHRNPQETVQVFIDLRTEHSYALWASLWSRCFTKKC).

This sequence belongs to the herpesviridae DNA primase family. As to quaternary structure, associates with the helicase and the primase-associated factor to form the helicase-primase factor. Interacts with host SNAPIN.

Its subcellular location is the host nucleus. In terms of biological role, essential component of the helicase/primase complex. Unwinds the DNA at the replication forks and generates single-stranded DNA for both leading and lagging strand synthesis. The primase initiates primer synthesis and thereby produces large amount of short RNA primers on the lagging strand that the polymerase elongates using dNTPs. In Homo sapiens (Human), this protein is DNA primase (UL70).